Consider the following 104-residue polypeptide: Large ribosomal subunit protein uL24 (104 aa).

It belongs to the universal ribosomal protein uL24 family. In terms of assembly, part of the 50S ribosomal subunit.

In terms of biological role, one of two assembly initiator proteins, it binds directly to the 5'-end of the 23S rRNA, where it nucleates assembly of the 50S subunit. One of the proteins that surrounds the polypeptide exit tunnel on the outside of the subunit. The sequence is that of Large ribosomal subunit protein uL24 from Saccharopolyspora erythraea (strain ATCC 11635 / DSM 40517 / JCM 4748 / NBRC 13426 / NCIMB 8594 / NRRL 2338).